The sequence spans 184 residues: Photosystem I assembly protein Ycf4 (184 aa).

The next 2 membrane-spanning stretches (helical) occupy residues 22–42 (FFWA…GTSS) and 57–77 (IIFF…LFIS).

The protein belongs to the Ycf4 family.

It is found in the plastid. The protein localises to the chloroplast thylakoid membrane. In terms of biological role, seems to be required for the assembly of the photosystem I complex. In Aethionema grandiflorum (Persian stone-cress), this protein is Photosystem I assembly protein Ycf4.